The sequence spans 528 residues: MNSVEIANELKELLNGGNINVQLSVPQLAEKATSRGEAMLTVDGAVRAETGKYTGRSPKDKYTVEEESTKDQIDWGKVNQPISSEVFDNLYVKVIKYLKERDELFVFKGFAGADKDSQLSIQVINEYAWHNLFAHQLFIRPTKEELASHVADFTVISAPNFKADPAVDGTASETFIIVSLEKKIILIGGTEYAGEMKKSIFGIMNYLLPQQGILSMHCSANVGEAGDVALFFGLSGTGKTTLSADPDRKLIGDDEHGWSDNGVFNIEGGCYAKTINLSAEKEPEIYNAIRFGSVLENVAVDPETRICDYDDGSLTENTRVAYPIQYIENIVDPSVAGHPKTIIFLTADAFGVLPPISKLTKEQAMYHFLSGFTSKLAGTERGVTEPEPVFSTCFGSPFLPLPATVYAEMLGQKIDEHGAQVYLVNTGWTGGEYGTGSRMKLSYTRTMVRAAIDGKLTNVETTQDAVFGLHIPTAVEGVPSQVLNPREAWADKAAYDAKAAELAGLFNENFKKFANVSEAITTLGGPLK.

Residues R56, Y192, and K198 each coordinate substrate. Residues K198, H217, and G233–T241 each bind ATP. The Mn(2+) site is built by K198 and H217. D254 is a Mn(2+) binding site. ATP is bound by residues E282, R319, and T444. R319 serves as a coordination point for substrate.

The protein belongs to the phosphoenolpyruvate carboxykinase (ATP) family. Requires Mn(2+) as cofactor.

It localises to the cytoplasm. It carries out the reaction oxaloacetate + ATP = phosphoenolpyruvate + ADP + CO2. It functions in the pathway carbohydrate biosynthesis; gluconeogenesis. In terms of biological role, involved in the gluconeogenesis. Catalyzes the conversion of oxaloacetate (OAA) to phosphoenolpyruvate (PEP) through direct phosphoryl transfer between the nucleoside triphosphate and OAA. The sequence is that of Phosphoenolpyruvate carboxykinase (ATP) from Lysinibacillus sphaericus (strain C3-41).